Consider the following 547-residue polypeptide: CTP synthase (547 aa).

The segment at Met1–Leu273 is amidoligase domain. Ser19 contacts CTP. Ser19 contacts UTP. Residue Ser20–Ile25 participates in ATP binding. Tyr60 is a binding site for L-glutamine. Asp77 contributes to the ATP binding site. The Mg(2+) site is built by Asp77 and Glu147. Residues Asp154 to Glu156, Lys194 to Gln199, and Lys230 contribute to the CTP site. UTP contacts are provided by residues Lys194 to Gln199 and Lys230. Residues Tyr306–Lys539 form the Glutamine amidotransferase type-1 domain. Residue Gly361 participates in L-glutamine binding. Cys388 serves as the catalytic Nucleophile; for glutamine hydrolysis. Residues Phe389–Gln392, Glu412, and Arg466 each bind L-glutamine. Residues His512 and Glu514 contribute to the active site.

The protein belongs to the CTP synthase family. As to quaternary structure, homotetramer.

It carries out the reaction UTP + L-glutamine + ATP + H2O = CTP + L-glutamate + ADP + phosphate + 2 H(+). The catalysed reaction is L-glutamine + H2O = L-glutamate + NH4(+). It catalyses the reaction UTP + NH4(+) + ATP = CTP + ADP + phosphate + 2 H(+). It participates in pyrimidine metabolism; CTP biosynthesis via de novo pathway; CTP from UDP: step 2/2. Its activity is regulated as follows. Allosterically activated by GTP, when glutamine is the substrate; GTP has no effect on the reaction when ammonia is the substrate. The allosteric effector GTP functions by stabilizing the protein conformation that binds the tetrahedral intermediate(s) formed during glutamine hydrolysis. Inhibited by the product CTP, via allosteric rather than competitive inhibition. Functionally, catalyzes the ATP-dependent amination of UTP to CTP with either L-glutamine or ammonia as the source of nitrogen. Regulates intracellular CTP levels through interactions with the four ribonucleotide triphosphates. This Phytoplasma australiense protein is CTP synthase.